We begin with the raw amino-acid sequence, 366 residues long: Chorismate synthase (366 aa).

NADP(+) is bound by residues R48 and R54. Residues 125–127, 238–239, G278, 293–297, and R319 each bind FMN; these read RSS, NA, and KPTSS.

Belongs to the chorismate synthase family. In terms of assembly, homotetramer. Requires FMNH2 as cofactor.

It carries out the reaction 5-O-(1-carboxyvinyl)-3-phosphoshikimate = chorismate + phosphate. The protein operates within metabolic intermediate biosynthesis; chorismate biosynthesis; chorismate from D-erythrose 4-phosphate and phosphoenolpyruvate: step 7/7. Its function is as follows. Catalyzes the anti-1,4-elimination of the C-3 phosphate and the C-6 proR hydrogen from 5-enolpyruvylshikimate-3-phosphate (EPSP) to yield chorismate, which is the branch point compound that serves as the starting substrate for the three terminal pathways of aromatic amino acid biosynthesis. This reaction introduces a second double bond into the aromatic ring system. This chain is Chorismate synthase, found in Ralstonia nicotianae (strain ATCC BAA-1114 / GMI1000) (Ralstonia solanacearum).